The primary structure comprises 611 residues: Dual specificity protein phosphatase CDC14AB (611 aa).

Residues 23-178 (DLLGASEFIK…ALQHGFLNFE (156 aa)) are a. Positions 179 to 192 (TFDVNEYEHYERVE) are linker. A b region spans residues 193–359 (NGDLNWITPG…HGDSLRSKQR (167 aa)). Positions 194 to 352 (GDLNWITPGK…KQASLWAHGD (159 aa)) constitute a Tyrosine-protein phosphatase domain. Residue Cys-294 is the Phosphocysteine intermediate of the active site. Residues 408–611 (KLRALKGRRQ…PSLQSEYVQY (204 aa)) are disordered. Residues 456-490 (SPLKSSKVPASSSSSSSSSSVSASAKRIGRSSSSS) are compositionally biased toward low complexity. Residues 491-511 (TNLKSTRLASSLGNLYEPNTE) show a composition bias toward polar residues. The segment covering 512-553 (SISSGKPPSPSSFTPHPVRTTYNYHYEVNNNNNQYSTTSSPS) has biased composition (low complexity). Composition is skewed to polar residues over residues 554 to 569 (KSLGYNLNHSGPSGAS) and 591 to 611 (GLSTRHLSRSIPSLQSEYVQY).

The protein belongs to the protein-tyrosine phosphatase family. Non-receptor class CDC14 subfamily.

It localises to the nucleus. The protein resides in the cytoplasm. The protein localises to the cytoskeleton. Its subcellular location is the microtubule organizing center. It is found in the centrosome. It localises to the spindle pole. The protein resides in the spindle. The protein localises to the cell projection. Its subcellular location is the kinocilium. It carries out the reaction O-phospho-L-tyrosyl-[protein] + H2O = L-tyrosyl-[protein] + phosphate. It catalyses the reaction O-phospho-L-seryl-[protein] + H2O = L-seryl-[protein] + phosphate. The catalysed reaction is O-phospho-L-threonyl-[protein] + H2O = L-threonyl-[protein] + phosphate. In terms of biological role, dual-specificity phosphatase. Required for centrosome separation and productive cytokinesis during cell division. Dephosphorylates SIRT2 around early anaphase. May dephosphorylate the APC subunit FZR1/CDH1, thereby promoting APC-FZR1 dependent degradation of mitotic cyclins and subsequent exit from mitosis. This Danio rerio (Zebrafish) protein is Dual specificity protein phosphatase CDC14AB (cdc14ab).